We begin with the raw amino-acid sequence, 143 residues long: Transcriptional regulator MraZ (143 aa).

2 consecutive SpoVT-AbrB domains span residues 5-47 and 76-119; these read EYRH…TQEE and ATEC…SEDR.

This sequence belongs to the MraZ family. As to quaternary structure, forms oligomers.

It localises to the cytoplasm. Its subcellular location is the nucleoid. The sequence is that of Transcriptional regulator MraZ from Ligilactobacillus salivarius (strain UCC118) (Lactobacillus salivarius).